A 326-amino-acid chain; its full sequence is 3-methyl-2-oxobutanoate hydroxymethyltransferase 1 (326 aa).

Residues D52, D91, and E122 each coordinate Mg(2+). 3-methyl-2-oxobutanoate-binding positions include 52-53 and D91; that span reads DS. E189 (proton acceptor) is an active-site residue.

The protein belongs to the PanB family. In terms of assembly, homodecamer; pentamer of dimers. It depends on Mg(2+) as a cofactor.

It localises to the cytoplasm. It catalyses the reaction 3-methyl-2-oxobutanoate + (6R)-5,10-methylene-5,6,7,8-tetrahydrofolate + H2O = 2-dehydropantoate + (6S)-5,6,7,8-tetrahydrofolate. Its pathway is cofactor biosynthesis; (R)-pantothenate biosynthesis; (R)-pantoate from 3-methyl-2-oxobutanoate: step 1/2. Catalyzes the reversible reaction in which hydroxymethyl group from 5,10-methylenetetrahydrofolate is transferred onto alpha-ketoisovalerate to form ketopantoate. The polypeptide is 3-methyl-2-oxobutanoate hydroxymethyltransferase 1 (Bradyrhizobium diazoefficiens (strain JCM 10833 / BCRC 13528 / IAM 13628 / NBRC 14792 / USDA 110)).